Here is a 343-residue protein sequence, read N- to C-terminus: uncharacterized protein (343 aa).

This is an uncharacterized protein from Tortricidae (ClGV).